A 371-amino-acid polypeptide reads, in one-letter code: Protein IQ-DOMAIN 7 (371 aa).

The segment at 1 to 32 is disordered; sequence MGGSGNWIRSLISNRKPVNDQQEKLSDKSSKK. Residues 17-29 are compositionally biased toward basic and acidic residues; sequence PVNDQQEKLSDKS. IQ domains are found at residues 93–121 and 122–144; these read REWA…AVVR and IQAI…CMQA. The calmodulin-binding stretch occupies residues 125–141; it reads IFRGRQVRKQAAVTLRC. Disordered regions lie at residues 285-308 and 327-371; these read SGMS…PVAF and LTQS…SQRS. 2 stretches are compositionally biased toward polar residues: residues 297-308 and 327-341; these read STSSTSQSPVAF and LTQS…SGLS.

This sequence belongs to the IQD family. In terms of assembly, binds to multiple calmodulin (CaM) in the presence of Ca(2+) and CaM-like proteins.

It localises to the nucleus. Its subcellular location is the nucleus envelope. The protein resides in the cytoplasm. The protein localises to the cytoskeleton. In terms of biological role, may be involved in cooperative interactions with calmodulins or calmodulin-like proteins. Recruits calmodulin proteins to microtubules, thus being a potential scaffold in cellular signaling and trafficking. May associate with nucleic acids and regulate gene expression at the transcriptional or post-transcriptional level. This Arabidopsis thaliana (Mouse-ear cress) protein is Protein IQ-DOMAIN 7.